A 480-amino-acid chain; its full sequence is F-box/LRR-repeat protein 14 (480 aa).

Residues 11–58 enclose the F-box domain; it reads DRQMDELPDHLVWDILSKLHTTDDRNSLSLSCKRFFSLDNEQRYSLRI. LRR repeat units lie at residues 61–86, 94–119, 120–144, 145–170, 171–196, 197–222, 229–257, 258–283, 284–309, 322–347, 355–379, 380–404, 405–429, 430–454, and 455–480; these read GLVP…EIIY, GKQV…TLSF, CTFI…KLNF, APRI…HLIR, CLNV…CIKN, CRAI…QFEV, MKVY…SLGN, CIIA…HLDM, CTGV…SLRV, TLRL…KISF, LFSF…SLDH, VCVF…ELVH, CQEV…KLSK, CLGV…VVED, and CPQV…SWMY.

The protein is F-box/LRR-repeat protein 14 (FBL14) of Arabidopsis thaliana (Mouse-ear cress).